The primary structure comprises 273 residues: 4-hydroxy-tetrahydrodipicolinate reductase (273 aa).

Residues 12–17 (GAGGRM) and glutamate 38 contribute to the NAD(+) site. NADP(+) is bound at residue arginine 39. Residues 102–104 (GTT) and 126–129 (AANF) contribute to the NAD(+) site. Histidine 159 (proton donor/acceptor) is an active-site residue. Residue histidine 160 participates in (S)-2,3,4,5-tetrahydrodipicolinate binding. The Proton donor role is filled by lysine 163. 169 to 170 (GT) is a (S)-2,3,4,5-tetrahydrodipicolinate binding site.

The protein belongs to the DapB family. Homotetramer.

The protein localises to the cytoplasm. It catalyses the reaction (S)-2,3,4,5-tetrahydrodipicolinate + NAD(+) + H2O = (2S,4S)-4-hydroxy-2,3,4,5-tetrahydrodipicolinate + NADH + H(+). It carries out the reaction (S)-2,3,4,5-tetrahydrodipicolinate + NADP(+) + H2O = (2S,4S)-4-hydroxy-2,3,4,5-tetrahydrodipicolinate + NADPH + H(+). It functions in the pathway amino-acid biosynthesis; L-lysine biosynthesis via DAP pathway; (S)-tetrahydrodipicolinate from L-aspartate: step 4/4. In terms of biological role, catalyzes the conversion of 4-hydroxy-tetrahydrodipicolinate (HTPA) to tetrahydrodipicolinate. The polypeptide is 4-hydroxy-tetrahydrodipicolinate reductase (Pectobacterium atrosepticum (strain SCRI 1043 / ATCC BAA-672) (Erwinia carotovora subsp. atroseptica)).